The primary structure comprises 187 residues: GTP cyclohydrolase 1 (187 aa).

Positions 76, 79, and 148 each coordinate Zn(2+).

Belongs to the GTP cyclohydrolase I family. Homomer.

It carries out the reaction GTP + H2O = 7,8-dihydroneopterin 3'-triphosphate + formate + H(+). Its pathway is cofactor biosynthesis; 7,8-dihydroneopterin triphosphate biosynthesis; 7,8-dihydroneopterin triphosphate from GTP: step 1/1. This chain is GTP cyclohydrolase 1, found in Streptococcus gordonii (strain Challis / ATCC 35105 / BCRC 15272 / CH1 / DL1 / V288).